A 216-amino-acid chain; its full sequence is Lipoprotein signal peptidase (216 aa).

The disordered stretch occupies residues methionine 1–glutamate 21. 3 helical membrane-spanning segments follow: residues valine 31–threonine 51, glycine 89–alanine 109, and serine 114–aspartate 134. Active-site residues include aspartate 149 and aspartate 164. Residues isoleucine 159–leucine 179 traverse the membrane as a helical segment. Positions glutamine 189 to alanine 216 are disordered. A compositionally biased stretch (basic and acidic residues) spans alanine 207 to alanine 216.

Belongs to the peptidase A8 family.

The protein resides in the cell membrane. The catalysed reaction is Release of signal peptides from bacterial membrane prolipoproteins. Hydrolyzes -Xaa-Yaa-Zaa-|-(S,diacylglyceryl)Cys-, in which Xaa is hydrophobic (preferably Leu), and Yaa (Ala or Ser) and Zaa (Gly or Ala) have small, neutral side chains.. The protein operates within protein modification; lipoprotein biosynthesis (signal peptide cleavage). This protein specifically catalyzes the removal of signal peptides from prolipoproteins. This chain is Lipoprotein signal peptidase, found in Leifsonia xyli subsp. xyli (strain CTCB07).